A 146-amino-acid polypeptide reads, in one-letter code: Ribonuclease H (146 aa).

In terms of domain architecture, RNase H type-1 spans 1 to 141; sequence MKKVQLITDG…CDELATRAAR (141 aa). Positions 9, 47, 69, and 133 each coordinate Mg(2+).

This sequence belongs to the RNase H family. Monomer. The cofactor is Mg(2+).

It localises to the cytoplasm. It carries out the reaction Endonucleolytic cleavage to 5'-phosphomonoester.. Functionally, endonuclease that specifically degrades the RNA of RNA-DNA hybrids. This Solibacter usitatus (strain Ellin6076) protein is Ribonuclease H.